A 65-amino-acid polypeptide reads, in one-letter code: Large ribosomal subunit protein bL35c (65 aa).

This sequence belongs to the bacterial ribosomal protein bL35 family.

Its subcellular location is the plastid. It localises to the cyanelle. The chain is Large ribosomal subunit protein bL35c (rpl35) from Cyanophora paradoxa.